A 222-amino-acid polypeptide reads, in one-letter code: Putative N-acetylmannosamine-6-phosphate 2-epimerase (222 aa).

This sequence belongs to the NanE family.

It catalyses the reaction an N-acyl-D-glucosamine 6-phosphate = an N-acyl-D-mannosamine 6-phosphate. Its pathway is amino-sugar metabolism; N-acetylneuraminate degradation; D-fructose 6-phosphate from N-acetylneuraminate: step 3/5. Functionally, converts N-acetylmannosamine-6-phosphate (ManNAc-6-P) to N-acetylglucosamine-6-phosphate (GlcNAc-6-P). In Staphylococcus aureus (strain USA300), this protein is Putative N-acetylmannosamine-6-phosphate 2-epimerase.